We begin with the raw amino-acid sequence, 84 residues long: Short neurotoxin SNTX-1 (84 aa).

Residues methionine 1–cysteine 21 form the signal peptide. 4 disulfides stabilise this stretch: cysteine 25–cysteine 46, cysteine 39–cysteine 63, cysteine 65–cysteine 76, and cysteine 77–cysteine 82.

It belongs to the three-finger toxin family. Short-chain subfamily. Type I alpha-neurotoxin sub-subfamily. In terms of tissue distribution, expressed by the venom gland.

The protein resides in the secreted. In terms of biological role, binds to muscle nicotinic acetylcholine receptor (nAChR) and inhibit acetylcholine from binding to the receptor, thereby impairing neuromuscular transmission. This chain is Short neurotoxin SNTX-1, found in Demansia vestigiata (Lesser black whip snake).